A 274-amino-acid chain; its full sequence is Long chain fatty acid elongase 6 (274 aa).

The Extracellular portion of the chain corresponds to 1 to 30 (MPQGEVSFFEVLTTAPFSHELSKKHIAQTQ). Residues 31 to 51 (YAAFWISMAYVVVIFGLKAVM) form a helical membrane-spanning segment. Residues 52-69 (TNRKPFDLTGPLNLWNAG) are Cytoplasmic-facing. Residues 70-90 (LAIFSTLGSLATTFGLLHEFF) form a helical membrane-spanning segment. The Extracellular portion of the chain corresponds to 91 to 111 (SRGFFESYIHIGDFYNGLSGM). A helical transmembrane segment spans residues 112–132 (FTWLFVLSKVAEFGDTLFIIL). At 133 to 135 (RKK) the chain is on the cytoplasmic side. The helical transmembrane segment at 136-156 (PLMFLHWYHHVLTMNYAFMSF) threads the bilayer. Topologically, residues 157–159 (EAN) are extracellular. A helical transmembrane segment spans residues 160–180 (LGFNTWITWMNFSVHSIMYGY). The Cytoplasmic segment spans residues 181–202 (YMLRSFGVKVPAWIAKNITTMQ). The chain crosses the membrane as a helical span at residues 203–223 (ILQFVITHFILFHVGYLAVTG). The Extracellular segment spans residues 224 to 230 (QSVDSTP). Residues 231–251 (GYYWFCLLMEISYVVLFGNFY) traverse the membrane as a helical segment. Topologically, residues 252–274 (YQSYIKGGGKKFNAEKKTEKKIE) are cytoplasmic.

The protein belongs to the ELO family. Expressed in the gut, neurons, pharynx and muscles of the vulva.

The protein localises to the membrane. The catalysed reaction is isopentadecanoyl-CoA + malonyl-CoA + H(+) = 3-oxoisoheptadecanoyl-CoA + CO2 + CoA. Its pathway is lipid metabolism; fatty acid biosynthesis. Catalyzes the first and rate-limiting reaction of the four reactions that constitute the long-chain fatty acids elongation cycle. Uses malonyl-CoA to add 2 carbons per cycle to the chain of long-chain fatty acids. Condensing enzyme required for the formation of isoheptadecanoate (C17iso), which plays critical roles in animal development and growth. The polypeptide is Long chain fatty acid elongase 6 (elo-6) (Caenorhabditis elegans).